We begin with the raw amino-acid sequence, 143 residues long: Histone H2B.2, sperm (143 aa).

Residues 1–52 (MPRSPSKSSPRKGSPRKGSPRKGSPKRGGKGAKRAGKGGRRRNVVKRRRRRR) are disordered. 5 short sequence motifs (SPKK motif) span residues 4-7 (SPSK), 9-12 (SPRK), 14-17 (SPRK), 19-22 (SPRK), and 24-27 (SPKR). Residues 9–52 (SPRKGSPRKGSPRKGSPKRGGKGAKRAGKGGRRRNVVKRRRRRR) are compositionally biased toward basic residues. S14, S19, and S24 each carry phosphoserine. An O-linked (GlcNAc) serine glycan is attached at S130. Residue K138 forms a Glycyl lysine isopeptide (Lys-Gly) (interchain with G-Cter in ubiquitin) linkage.

It belongs to the histone H2B family. The nucleosome is a histone octamer containing two molecules each of H2A, H2B, H3 and H4 assembled in one H3-H4 heterotetramer and two H2A-H2B heterodimers. The octamer wraps approximately 147 bp of DNA. Monoubiquitination of Lys-138 gives a specific tag for epigenetic transcriptional activation and is also prerequisite for histone H3 'Lys-4' and 'Lys-79' methylation. In terms of processing, phosphorylated on SPKK motifs 3, 4 and 5; which may regulate DNA binding. Dephosphorylated during maturation of spermatids to mature sperm and rephosphorylated at fertilization. Post-translationally, glcNAcylation at Ser-130 promotes monoubiquitination of Lys-138. It fluctuates in response to extracellular glucose, and associates with transcribed genes. Testis-specific.

The protein resides in the nucleus. It is found in the chromosome. In terms of biological role, core component of nucleosome. Nucleosomes wrap and compact DNA into chromatin, limiting DNA accessibility to the cellular machineries which require DNA as a template. Histones thereby play a central role in transcription regulation, DNA repair, DNA replication and chromosomal stability. DNA accessibility is regulated via a complex set of post-translational modifications of histones, also called histone code, and nucleosome remodeling. The sequence is that of Histone H2B.2, sperm from Lytechinus pictus (Painted sea urchin).